A 571-amino-acid polypeptide reads, in one-letter code: Proline--tRNA ligase (571 aa).

It belongs to the class-II aminoacyl-tRNA synthetase family. ProS type 1 subfamily. As to quaternary structure, homodimer.

Its subcellular location is the cytoplasm. The enzyme catalyses tRNA(Pro) + L-proline + ATP = L-prolyl-tRNA(Pro) + AMP + diphosphate. Functionally, catalyzes the attachment of proline to tRNA(Pro) in a two-step reaction: proline is first activated by ATP to form Pro-AMP and then transferred to the acceptor end of tRNA(Pro). As ProRS can inadvertently accommodate and process non-cognate amino acids such as alanine and cysteine, to avoid such errors it has two additional distinct editing activities against alanine. One activity is designated as 'pretransfer' editing and involves the tRNA(Pro)-independent hydrolysis of activated Ala-AMP. The other activity is designated 'posttransfer' editing and involves deacylation of mischarged Ala-tRNA(Pro). The misacylated Cys-tRNA(Pro) is not edited by ProRS. The sequence is that of Proline--tRNA ligase from Pseudomonas putida (strain GB-1).